A 285-amino-acid chain; its full sequence is tRNA (adenine(58)-N(1))-methyltransferase catalytic subunit TRMT61A (285 aa).

An N-acetylserine modification is found at serine 2. 5 substrate regions span residues 20 to 22, 35 to 42, 64 to 65, 85 to 89, and 110 to 117; these read LGH, QTQTRHGV, GW, QILYS, and SGTGSGSV. Residues leucine 87, 114 to 116, glutamate 135, arginine 140, 163 to 164, and aspartate 181 each bind S-adenosyl-L-methionine; these read SGS and DV. Substrate stretches follow at residues 180 to 183 and 205 to 212; these read LDIP and SFSPCIEQ. Threonine 274 is a binding site for substrate.

It belongs to the class I-like SAM-binding methyltransferase superfamily. TRM61 family. In terms of assembly, heterotetramer; composed of two copies of TRMT6 and two copies of TRMT61A.

It localises to the nucleus. It carries out the reaction adenosine(58) in tRNA + S-adenosyl-L-methionine = N(1)-methyladenosine(58) in tRNA + S-adenosyl-L-homocysteine + H(+). It catalyses the reaction an adenosine in mRNA + S-adenosyl-L-methionine = an N(1)-methyladenosine in mRNA + S-adenosyl-L-homocysteine + H(+). Functionally, catalytic subunit of tRNA (adenine-N(1)-)-methyltransferase, which catalyzes the formation of N(1)-methyladenine at position 58 (m1A58) in initiator methionyl-tRNA. Catalytic subunit of mRNA N(1)-methyltransferase complex, which mediates methylation of adenosine residues at the N(1) position of a small subset of mRNAs: N(1) methylation takes place in tRNA T-loop-like structures of mRNAs and is only present at low stoichiometries. This is tRNA (adenine(58)-N(1))-methyltransferase catalytic subunit TRMT61A (TRMT61A) from Bos taurus (Bovine).